We begin with the raw amino-acid sequence, 570 residues long: Proline--tRNA ligase (570 aa).

This sequence belongs to the class-II aminoacyl-tRNA synthetase family. ProS type 1 subfamily. In terms of assembly, homodimer.

Its subcellular location is the cytoplasm. It carries out the reaction tRNA(Pro) + L-proline + ATP = L-prolyl-tRNA(Pro) + AMP + diphosphate. Functionally, catalyzes the attachment of proline to tRNA(Pro) in a two-step reaction: proline is first activated by ATP to form Pro-AMP and then transferred to the acceptor end of tRNA(Pro). As ProRS can inadvertently accommodate and process non-cognate amino acids such as alanine and cysteine, to avoid such errors it has two additional distinct editing activities against alanine. One activity is designated as 'pretransfer' editing and involves the tRNA(Pro)-independent hydrolysis of activated Ala-AMP. The other activity is designated 'posttransfer' editing and involves deacylation of mischarged Ala-tRNA(Pro). The misacylated Cys-tRNA(Pro) is not edited by ProRS. In Clostridium botulinum (strain Eklund 17B / Type B), this protein is Proline--tRNA ligase.